The sequence spans 243 residues: ATP synthase subunit a (243 aa).

8 helical membrane passes run 29–49, 54–74, 89–109, 114–134, 141–161, 177–197, 200–220, and 221–241; these read NASLFMVLSTFLISLSCYVGL, VIPNPLQSIIEIIYDFIVSTI, VFTIFTFILVCNLLGILPLGF, HIAVTFAISMIVFISVTFIGF, FLHILLPQGTPMWLAPMMVLI, LAANMIAGHTIIKVIAGFVIN, IFLTPLPIAFIIILIGFEIFV, and AILQAYIFTVLTCVYLSDAVN.

It belongs to the ATPase A chain family. As to quaternary structure, F-type ATPases have 2 components, CF(1) - the catalytic core - and CF(0) - the membrane proton channel. CF(1) has five subunits: alpha(3), beta(3), gamma(1), delta(1), epsilon(1). CF(0) has three main subunits: a(1), b(2) and c(9-12). The alpha and beta chains form an alternating ring which encloses part of the gamma chain. CF(1) is attached to CF(0) by a central stalk formed by the gamma and epsilon chains, while a peripheral stalk is formed by the delta and b chains.

Its subcellular location is the cell inner membrane. In terms of biological role, key component of the proton channel; it plays a direct role in the translocation of protons across the membrane. The chain is ATP synthase subunit a from Ehrlichia ruminantium (strain Welgevonden).